A 206-amino-acid polypeptide reads, in one-letter code: Small ribosomal subunit protein uS2 (206 aa).

The protein belongs to the universal ribosomal protein uS2 family.

The chain is Small ribosomal subunit protein uS2 from Methanothrix thermoacetophila (strain DSM 6194 / JCM 14653 / NBRC 101360 / PT) (Methanosaeta thermophila).